The chain runs to 238 residues: Fatty acid metabolism regulator protein (238 aa).

An HTH gntR-type domain is found at 6–74; it reads KGPASFAEKY…HGKPTRVNNF (69 aa). The H-T-H motif DNA-binding region spans 34–53; sequence ERELSELIGVTRTTLREVLQ.

As to quaternary structure, homodimer.

Its subcellular location is the cytoplasm. Multifunctional regulator of fatty acid metabolism. In Shewanella putrefaciens (strain CN-32 / ATCC BAA-453), this protein is Fatty acid metabolism regulator protein.